Reading from the N-terminus, the 142-residue chain is Large ribosomal subunit protein uL13 (142 aa).

It belongs to the universal ribosomal protein uL13 family. As to quaternary structure, part of the 50S ribosomal subunit.

Functionally, this protein is one of the early assembly proteins of the 50S ribosomal subunit, although it is not seen to bind rRNA by itself. It is important during the early stages of 50S assembly. This is Large ribosomal subunit protein uL13 from Alkaliphilus metalliredigens (strain QYMF).